A 134-amino-acid chain; its full sequence is Small ribosomal subunit protein uS12 (134 aa).

Asp89 is modified (3-methylthioaspartic acid). Positions 103–134 are disordered; it reads DTAGVKDRKQGRSKYGAKRPKPGEAAATGKKK. Residues 113 to 122 show a composition bias toward basic residues; it reads GRSKYGAKRP.

This sequence belongs to the universal ribosomal protein uS12 family. As to quaternary structure, part of the 30S ribosomal subunit. Contacts proteins S8 and S17. May interact with IF1 in the 30S initiation complex.

Functionally, with S4 and S5 plays an important role in translational accuracy. Its function is as follows. Interacts with and stabilizes bases of the 16S rRNA that are involved in tRNA selection in the A site and with the mRNA backbone. Located at the interface of the 30S and 50S subunits, it traverses the body of the 30S subunit contacting proteins on the other side and probably holding the rRNA structure together. The combined cluster of proteins S8, S12 and S17 appears to hold together the shoulder and platform of the 30S subunit. The polypeptide is Small ribosomal subunit protein uS12 (Thermosynechococcus vestitus (strain NIES-2133 / IAM M-273 / BP-1)).